The chain runs to 374 residues: Probable aminopeptidase YDR415C (374 aa).

A signal peptide spans Met1–Ser18. Residues His177, Asp196, Glu235, Asp262, and His340 each coordinate Zn(2+).

It belongs to the peptidase M28 family. M28E subfamily. Requires Zn(2+) as cofactor.

The protein is Probable aminopeptidase YDR415C of Saccharomyces cerevisiae (strain ATCC 204508 / S288c) (Baker's yeast).